The chain runs to 332 residues: L-lactate dehydrogenase A chain (332 aa).

K5 is subject to N6-acetyllysine; alternate. K5 is modified (N6-succinyllysine; alternate). Position 14 is an N6-acetyllysine (K14). At T18 the chain carries Phosphothreonine. 29-57 (GAVGMACAISILMKDLADELALVDVIEDK) contributes to the NAD(+) binding site. K57 carries the N6-acetyllysine; alternate modification. Residue K57 forms a Glycyl lysine isopeptide (Lys-Gly) (interchain with G-Cter in SUMO2); alternate linkage. Position 81 is an N6-acetyllysine (K81). R99 serves as a coordination point for NAD(+). A substrate-binding site is contributed by R106. K118 is modified (N6-acetyllysine; alternate). K118 is modified (N6-succinyllysine; alternate). The residue at position 126 (K126) is an N6-acetyllysine. Residue N138 participates in NAD(+) binding. Substrate-binding residues include N138 and R169. H193 (proton acceptor) is an active-site residue. Position 232 is an N6-acetyllysine (K232). Y239 is subject to Phosphotyrosine. K243 is modified (N6-acetyllysine). T248 contributes to the substrate binding site. Phosphothreonine is present on residues T309 and T322.

It belongs to the LDH/MDH superfamily. LDH family. As to quaternary structure, homotetramer. Interacts with PTEN upstream reading frame protein MP31. Post-translationally, ISGylated.

The protein resides in the cytoplasm. The enzyme catalyses (S)-lactate + NAD(+) = pyruvate + NADH + H(+). The protein operates within fermentation; pyruvate fermentation to lactate; (S)-lactate from pyruvate: step 1/1. Interconverts simultaneously and stereospecifically pyruvate and lactate with concomitant interconversion of NADH and NAD(+). The polypeptide is L-lactate dehydrogenase A chain (LDHA) (Monodelphis domestica (Gray short-tailed opossum)).